Here is a 318-residue protein sequence, read N- to C-terminus: Ubiquitin-like domain-containing CTD phosphatase 1 (318 aa).

One can recognise a Ubiquitin-like domain in the interval 3 to 81 (LSLIIKWGGQ…IMMMGTREES (79 aa)). In terms of domain architecture, FCP1 homology spans 133-294 (PREGKKLLVL…LKLSQYLKEI (162 aa)). Residues Asp143, Asp145, and Asp253 each coordinate Mg(2+).

Mg(2+) serves as cofactor.

It is found in the nucleus. It catalyses the reaction O-phospho-L-seryl-[protein] + H2O = L-seryl-[protein] + phosphate. The enzyme catalyses O-phospho-L-threonyl-[protein] + H2O = L-threonyl-[protein] + phosphate. Dephosphorylates 26S nuclear proteasomes, thereby decreasing their proteolytic activity. Recruited to the 19S regulatory particle of the 26S proteasome where it dephosphorylates 19S component psmc2 which impairs psmc2 ATPase activity and disrupts 26S proteasome assembly. Has also been reported to stimulate the proteolytic activity of the 26S proteasome. The protein is Ubiquitin-like domain-containing CTD phosphatase 1 (ublcp1) of Xenopus tropicalis (Western clawed frog).